Reading from the N-terminus, the 457-residue chain is Multidrug resistance protein MdtK (457 aa).

The next 12 helical transmembrane spans lie at 11–31, 53–73, 93–113, 127–147, 160–180, 188–208, 243–263, 276–296, 314–334, 350–370, 387–407, and 418–438; these read LLALAIPVILAQVAQTAMGFV, IWLPAILFGHGLLLALTPVIA, WLAGFVSVLVMIVLWNAGYII, AVGYLRALLWGAPGYLFFQVA, GMVMGFLGLLVNIPVNYIFIY, LGGIGCGVATAAVYWVMFIAM, LPIALALFFEVTLFAVVALLV, IALNFSSLMFVLPMSLAAAVT, AARTGLGVGICMAVVTAIFTV, VVALAAQLMLLAAVYQISDSI, IFFITFTAYWVLGLPSGYILA, and PAGFWMGFIIGLTSAAVLMML.

It belongs to the multi antimicrobial extrusion (MATE) (TC 2.A.66.1) family. MdtK subfamily.

It is found in the cell inner membrane. Multidrug efflux pump that functions probably as a Na(+)/drug antiporter. The protein is Multidrug resistance protein MdtK of Salmonella enteritidis PT4 (strain P125109).